The following is a 355-amino-acid chain: Peptide chain release factor 1 (355 aa).

Gln-233 bears the N5-methylglutamine mark.

This sequence belongs to the prokaryotic/mitochondrial release factor family. Methylated by PrmC. Methylation increases the termination efficiency of RF1.

The protein localises to the cytoplasm. Functionally, peptide chain release factor 1 directs the termination of translation in response to the peptide chain termination codons UAG and UAA. This is Peptide chain release factor 1 from Bacillus anthracis.